Here is a 344-residue protein sequence, read N- to C-terminus: Follistatin (344 aa).

A signal peptide spans 1 to 29 (MVCARHQPGGLCLLLLLLCQFMEDRSAQA). The region spanning 30 to 103 (GNCWLRQAKN…TCENVDCGPG (74 aa)) is the TB domain. 18 cysteine pairs are disulfide-bonded: Cys-32-Cys-55, Cys-42-Cys-88, Cys-56-Cys-91, Cys-95-Cys-106, Cys-100-Cys-116, Cys-118-Cys-150, Cys-122-Cys-143, Cys-132-Cys-164, Cys-168-Cys-179, Cys-173-Cys-189, Cys-192-Cys-225, Cys-196-Cys-218, Cys-207-Cys-239, Cys-245-Cys-256, Cys-250-Cys-267, Cys-270-Cys-302, Cys-274-Cys-295, and Cys-284-Cys-316. A Follistatin-like 1 domain is found at 94–117 (TCENVDCGPGKKCRMNKKNKPRCV). A Kazal-like 1 domain is found at 112-166 (NKPRCVCAPDCSNITWKGPVCGLDGKTYRNECALLKARCKEQPELEVQYQGKCKK). N-linked (GlcNAc...) asparagine glycosylation occurs at Asn-124. Residues 167–190 (TCRDVFCPGSSTCVVDQTNNAYCV) form the Follistatin-like 2 domain. The Kazal-like 2 domain occupies 186-241 (NAYCVTCNRICPEPSSSEQSLCGNDGVTYSSACHLRKATCLLGRSIGLAYEGKCIK). Residues 244 to 268 (SCEDIQCGGGKKCLWDFKVGRGRCS) enclose the Follistatin-like 3 domain. In terms of domain architecture, Kazal-like 3 spans 264 to 318 (RGRCSLCDELCPDSKSDEPVCASDNATYASECAMKEAACSSGVLLEVKHSGSCNS). N-linked (GlcNAc...) asparagine glycosylation is present at Asn-288. A disordered region spans residues 315–344 (SCNSISEETEEEEEEEDQDYSFPISSTLEW). Residues 321-333 (EETEEEEEEEDQD) show a composition bias toward acidic residues.

As to quaternary structure, interacts with GDF11. Interacts with activin A/INHBA. Interacts with myostatin/MSTN.

It localises to the secreted. The protein localises to the nucleus. Its subcellular location is the nucleolus. Its function is as follows. Multifunctional regulatory protein whose primary function is to antagonize members of the transforming growth factor beta (TGF-beta) superfamily including activin, myostatin, GDF11 or bone morphogenetic proteins (BMPs). Mechanistically, binds to these ligands in the extracellular space, blocking their type II receptor-binding site to inhibit downstream signaling. Plays an essential role in muscle fiber formation and growth both by preventing the repressive effects of myostatin and through SMAD3/AKT/mTOR signaling independently of myostatin. Also promotes neural differentiation by antagonizing the action BMP4. Acts as a specific inhibitor of the biosynthesis and secretion of pituitary follicle stimulating hormone (FSH) by sequestering activin A/INHBA. On the other hand, translocates into the nucleus where it down-regulates rRNA synthesis and ribosome biogenesis to maintain cellular energy homeostasis by binding to rDNA. In Rattus norvegicus (Rat), this protein is Follistatin.